We begin with the raw amino-acid sequence, 684 residues long: Glycine--tRNA ligase beta subunit (684 aa).

It belongs to the class-II aminoacyl-tRNA synthetase family. In terms of assembly, tetramer of two alpha and two beta subunits.

It localises to the cytoplasm. It catalyses the reaction tRNA(Gly) + glycine + ATP = glycyl-tRNA(Gly) + AMP + diphosphate. This Pseudomonas entomophila (strain L48) protein is Glycine--tRNA ligase beta subunit.